The sequence spans 325 residues: Histone-lysine N-methyltransferase ATXR4 (325 aa).

Residues 1–30 (MSRLALNRYSRCFSRLKTLTTPLFFSSSAA) form the signal peptide. Residues 42–295 (PPIRVGLTES…EGEELRICYI (254 aa)) enclose the SET domain.

The protein belongs to the class V-like SAM-binding methyltransferase superfamily. Histone-lysine methyltransferase family. TRX/MLL subfamily.

The protein resides in the nucleus. The catalysed reaction is L-lysyl-[histone] + S-adenosyl-L-methionine = N(6)-methyl-L-lysyl-[histone] + S-adenosyl-L-homocysteine + H(+). In terms of biological role, histone methyltransferase. This chain is Histone-lysine N-methyltransferase ATXR4 (ATXR4), found in Arabidopsis thaliana (Mouse-ear cress).